The following is a 79-amino-acid chain: UPF0154 protein Lm4b_01315 (79 aa).

A helical membrane pass occupies residues 2-22; it reads WIYILVGIICLLAGLAGGFFI. Over residues 57-66 the composition is skewed to polar residues; that stretch reads KINQMMSAMN. The interval 57-79 is disordered; the sequence is KINQMMSAMNKQQEKEKPKKTKK.

The protein belongs to the UPF0154 family.

It localises to the cell membrane. This chain is UPF0154 protein Lm4b_01315, found in Listeria monocytogenes serotype 4b (strain CLIP80459).